We begin with the raw amino-acid sequence, 400 residues long: Tryptophan synthase beta chain (400 aa).

N6-(pyridoxal phosphate)lysine is present on Lys-92.

It belongs to the TrpB family. As to quaternary structure, tetramer of two alpha and two beta chains. Requires pyridoxal 5'-phosphate as cofactor.

The enzyme catalyses (1S,2R)-1-C-(indol-3-yl)glycerol 3-phosphate + L-serine = D-glyceraldehyde 3-phosphate + L-tryptophan + H2O. Its pathway is amino-acid biosynthesis; L-tryptophan biosynthesis; L-tryptophan from chorismate: step 5/5. In terms of biological role, the beta subunit is responsible for the synthesis of L-tryptophan from indole and L-serine. The chain is Tryptophan synthase beta chain from Neisseria meningitidis serogroup C (strain 053442).